Here is a 203-residue protein sequence, read N- to C-terminus: Holliday junction branch migration complex subunit RuvA (203 aa).

A domain I region spans residues 1-62 (MYEYFLGQVT…ENGMSLFGFF (62 aa)). Residues 63 to 141 (DADEKALFEK…DLNVDVTGQT (79 aa)) are domain II. The flexible linker stretch occupies residues 142–148 (ALDVDAP). A domain III region spans residues 149–203 (AVDGALADALAALEALGYSKADVKKVTKKLETFSQTQGADTNTLLSEGLRLLMKK).

Belongs to the RuvA family. In terms of assembly, homotetramer. Forms an RuvA(8)-RuvB(12)-Holliday junction (HJ) complex. HJ DNA is sandwiched between 2 RuvA tetramers; dsDNA enters through RuvA and exits via RuvB. An RuvB hexamer assembles on each DNA strand where it exits the tetramer. Each RuvB hexamer is contacted by two RuvA subunits (via domain III) on 2 adjacent RuvB subunits; this complex drives branch migration. In the full resolvosome a probable DNA-RuvA(4)-RuvB(12)-RuvC(2) complex forms which resolves the HJ.

Its subcellular location is the cytoplasm. The RuvA-RuvB-RuvC complex processes Holliday junction (HJ) DNA during genetic recombination and DNA repair, while the RuvA-RuvB complex plays an important role in the rescue of blocked DNA replication forks via replication fork reversal (RFR). RuvA specifically binds to HJ cruciform DNA, conferring on it an open structure. The RuvB hexamer acts as an ATP-dependent pump, pulling dsDNA into and through the RuvAB complex. HJ branch migration allows RuvC to scan DNA until it finds its consensus sequence, where it cleaves and resolves the cruciform DNA. This is Holliday junction branch migration complex subunit RuvA from Lactiplantibacillus plantarum (strain ATCC BAA-793 / NCIMB 8826 / WCFS1) (Lactobacillus plantarum).